We begin with the raw amino-acid sequence, 211 residues long: Neuroendocrine protein 7B2 (211 aa).

A signal peptide spans 1–26 (MVSRMVSTMLSGLLFWLASGWTPAFA). A disordered region spans residues 106-132 (DFSEDQGYPDPPNPCPVGKTDDGCLEN). A disulfide bridge connects residues Cys-120 and Cys-129. Phosphoserine occurs at positions 140 and 204. The segment at 173 to 211 (GGERRKRRSVNPYLQGQRLDNVVAKKSVPHFSDEDKDPE) is disordered.

The protein belongs to the 7B2 family. Interacts with PCSK2/PC2 early in the secretory pathway. Dissociation occurs at later stages. In terms of processing, proteolytically cleaved in the Golgi by a furin-like convertase to generate bioactive peptides. Post-translationally, sulfated on tyrosine residues.

Its subcellular location is the secreted. In terms of biological role, acts as a molecular chaperone for PCSK2/PC2, preventing its premature activation in the regulated secretory pathway. Binds to inactive PCSK2 in the endoplasmic reticulum and facilitates its transport from there to later compartments of the secretory pathway where it is proteolytically matured and activated. Also required for cleavage of PCSK2 but does not appear to be involved in its folding. Plays a role in regulating pituitary hormone secretion. The C-terminal peptide inhibits PCSK2 in vitro. This is Neuroendocrine protein 7B2 (SCG5) from Pan troglodytes (Chimpanzee).